We begin with the raw amino-acid sequence, 75 residues long: Large ribosomal subunit protein bL31 (75 aa).

Zn(2+) is bound by residues cysteine 16, cysteine 18, cysteine 37, and cysteine 40.

The protein belongs to the bacterial ribosomal protein bL31 family. Type A subfamily. As to quaternary structure, part of the 50S ribosomal subunit. It depends on Zn(2+) as a cofactor.

Its function is as follows. Binds the 23S rRNA. The protein is Large ribosomal subunit protein bL31 of Pseudomonas syringae pv. tomato (strain ATCC BAA-871 / DC3000).